A 251-amino-acid chain; its full sequence is Imidazole glycerol phosphate synthase subunit HisF (251 aa).

Active-site residues include aspartate 11 and aspartate 130.

Belongs to the HisA/HisF family. Heterodimer of HisH and HisF.

It is found in the cytoplasm. It carries out the reaction 5-[(5-phospho-1-deoxy-D-ribulos-1-ylimino)methylamino]-1-(5-phospho-beta-D-ribosyl)imidazole-4-carboxamide + L-glutamine = D-erythro-1-(imidazol-4-yl)glycerol 3-phosphate + 5-amino-1-(5-phospho-beta-D-ribosyl)imidazole-4-carboxamide + L-glutamate + H(+). It participates in amino-acid biosynthesis; L-histidine biosynthesis; L-histidine from 5-phospho-alpha-D-ribose 1-diphosphate: step 5/9. IGPS catalyzes the conversion of PRFAR and glutamine to IGP, AICAR and glutamate. The HisF subunit catalyzes the cyclization activity that produces IGP and AICAR from PRFAR using the ammonia provided by the HisH subunit. The polypeptide is Imidazole glycerol phosphate synthase subunit HisF (Pelagibacter ubique (strain HTCC1062)).